The following is a 342-amino-acid chain: MENTIRSLQQEIIDFEITTAADLEAFRLRYTVRKGLIAALFGQLKTVEPAEKPRMGQLLNQLKQTADAKLTEAEERLAGTESKSSSNRIDLTLPGRRYFTGSEHPVQKVLGEMKSIFSAMGFGIATGPELETDQYNFDLLNFPPDHPARDMQDTFFVTSGNPGSDVLLRTHTSPVQIRVMLDQKPPIRVICPGKVYRNEAISSRSYCVFHQLEGLYIDKKVSFADLKATIYSFAKQMFGTDVKLRFRPSFFPFTEPSAEVDVTCYLCGGKGCKVCKKSGWLEIMGCGMVHPNVMRNCGIDPEEWSGYAFGMGVDRTVLLRYKIDDIRLLFENDLRMLKQFTA.

Position 255 (Glu-255) interacts with Mg(2+).

It belongs to the class-II aminoacyl-tRNA synthetase family. Phe-tRNA synthetase alpha subunit type 1 subfamily. In terms of assembly, tetramer of two alpha and two beta subunits. Mg(2+) is required as a cofactor.

The protein resides in the cytoplasm. It catalyses the reaction tRNA(Phe) + L-phenylalanine + ATP = L-phenylalanyl-tRNA(Phe) + AMP + diphosphate + H(+). The polypeptide is Phenylalanine--tRNA ligase alpha subunit (Pelodictyon phaeoclathratiforme (strain DSM 5477 / BU-1)).